The following is a 151-amino-acid chain: Transcriptional regulator MraZ (151 aa).

SpoVT-AbrB domains lie at 5-52 and 81-124; these read ANAI…PLDE and AVDL…DEDA.

Belongs to the MraZ family. As to quaternary structure, forms oligomers.

The protein localises to the cytoplasm. Its subcellular location is the nucleoid. This Pseudomonas fluorescens (strain SBW25) protein is Transcriptional regulator MraZ.